The primary structure comprises 288 residues: MKITVPATSANIGPGFDSVGVALSKYLSIEVLEEAASWHISHDLGDIPSDEHNLLLVTALKVAPDLRPHRLRMVSDIPLARGLGSSSSVIVAGIELANQLADLNLTDSEKLDIATEIEGHPDNVAPALFGNLVISSYINQKVNYVVADFPKSSFIAFIPNYELKTSDSRDVLPTDLTYKEAVAASSIANVAIAGLLTGDLKTAGEAIMNDRFHERFRQSLVREFAQIKEIGKRNGAYASYLSGAGPTVIVLTDQDKADQIKADIDALELSGSTHLLRIDAKGVRVEKN.

78–88 (PLARGLGSSSS) contributes to the ATP binding site.

This sequence belongs to the GHMP kinase family. Homoserine kinase subfamily.

Its subcellular location is the cytoplasm. It catalyses the reaction L-homoserine + ATP = O-phospho-L-homoserine + ADP + H(+). The protein operates within amino-acid biosynthesis; L-threonine biosynthesis; L-threonine from L-aspartate: step 4/5. Functionally, catalyzes the ATP-dependent phosphorylation of L-homoserine to L-homoserine phosphate. The protein is Homoserine kinase of Streptococcus mutans serotype c (strain ATCC 700610 / UA159).